Here is a 398-residue protein sequence, read N- to C-terminus: Phosphoglycerate kinase (398 aa).

Substrate-binding positions include Asp21–Asn23, Arg36, His59–Arg62, Arg119, and Arg157. Residues Lys208, Gly296, Glu327, and Gly354 to Ser357 each bind ATP.

The protein belongs to the phosphoglycerate kinase family. In terms of assembly, monomer.

It is found in the cytoplasm. The catalysed reaction is (2R)-3-phosphoglycerate + ATP = (2R)-3-phospho-glyceroyl phosphate + ADP. It functions in the pathway carbohydrate degradation; glycolysis; pyruvate from D-glyceraldehyde 3-phosphate: step 2/5. This chain is Phosphoglycerate kinase, found in Streptococcus mutans serotype c (strain ATCC 700610 / UA159).